The primary structure comprises 256 residues: Probable aquaporin TIP5-1 (256 aa).

N-acetylmethionine is present on M1. 5 helical membrane passes run 24 to 44 (CYVSEFISTFFFVLAAVGSVM), 57 to 77 (PFGVLIPAIANALALSSSVYI), 89 to 109 (AVTFAMAVAGRISVPTAMFYW), 144 to 164 (FGASVLEGVLAFVLVYTVFTA), and 171 to 191 (LPLAVGPIFIGFVAGANVLAA). The NPA 1 signature appears at 87-89 (NPA). An NPA 2 motif is present at residues 200–202 (NPA). The helical transmembrane segment at 222 to 242 (VGPLLGGATAALVYDNVVVPV) threads the bilayer. Residue S249 is modified to Phosphoserine.

This sequence belongs to the MIP/aquaporin (TC 1.A.8) family. TIP (TC 1.A.8.10) subfamily.

Its subcellular location is the membrane. Its function is as follows. Potential aquaporin, which may facilitate the transport of water and small neutral solutes across cell membranes. The sequence is that of Probable aquaporin TIP5-1 (TIP5-1) from Arabidopsis thaliana (Mouse-ear cress).